Consider the following 277-residue polypeptide: Putative phosphoenolpyruvate synthase regulatory protein (277 aa).

An ADP-binding site is contributed by 156-163 (GVSRAGKT).

This sequence belongs to the pyruvate, phosphate/water dikinase regulatory protein family. PSRP subfamily.

It carries out the reaction [pyruvate, water dikinase] + ADP = [pyruvate, water dikinase]-phosphate + AMP + H(+). The enzyme catalyses [pyruvate, water dikinase]-phosphate + phosphate + H(+) = [pyruvate, water dikinase] + diphosphate. Functionally, bifunctional serine/threonine kinase and phosphorylase involved in the regulation of the phosphoenolpyruvate synthase (PEPS) by catalyzing its phosphorylation/dephosphorylation. The sequence is that of Putative phosphoenolpyruvate synthase regulatory protein from Deinococcus radiodurans (strain ATCC 13939 / DSM 20539 / JCM 16871 / CCUG 27074 / LMG 4051 / NBRC 15346 / NCIMB 9279 / VKM B-1422 / R1).